Reading from the N-terminus, the 649-residue chain is Lipoteichoic acid synthase 2 (649 aa).

Residues 1–9 (MKTFIKERG) lie on the Cytoplasmic side of the membrane. Residues 10–30 (LAFFLIAVVLLWIKTYVGYVL) traverse the membrane as a helical segment. Over 31 to 42 (NFNLGIDNTIQK) the chain is Extracellular. A helical transmembrane segment spans residues 43–63 (ILLFVNPLSSSLFFLGFGLLF). Residues 64–69 (KKKLQQ) lie on the Cytoplasmic side of the membrane. Residues 70 to 90 (TAIIVIHFLMSFLLYANIVYY) traverse the membrane as a helical segment. At 91–118 (RFFNDFITIPVIMQAKTNGGQLGDSAFS) the chain is on the extracellular side. The helical transmembrane segment at 119–139 (LMRPTDAFYFIDTIILIILAI) threads the bilayer. Residues 140–151 (KVNKPAETSSKK) lie on the Cytoplasmic side of the membrane. Residues 152-172 (SFRIIFASSILVFLINLAVAE) form a helical membrane-spanning segment. The Extracellular segment spans residues 173 to 649 (SDRPELLTRS…SETSKDNEDK (477 aa)). Residues E253 and T297 each contribute to the Mn(2+) site. Residue T297 is part of the active site. H412 provides a ligand contact to substrate. Mn(2+)-binding residues include D471 and H472. The disordered stretch occupies residues 622-649 (FKKVNPSDYDYTKHDEDSSETSKDNEDK). The segment covering 631–649 (DYTKHDEDSSETSKDNEDK) has biased composition (basic and acidic residues).

This sequence belongs to the LTA synthase family. In terms of processing, proteolytically cleaved.

The protein resides in the cell membrane. It localises to the secreted. It participates in cell wall biogenesis; lipoteichoic acid biosynthesis. Its function is as follows. Catalyzes the polymerization of lipoteichoic acid (LTA) polyglycerol phosphate, a reaction that presumably uses phosphatidylglycerol (PG) as substrate. This Bacillus subtilis (strain 168) protein is Lipoteichoic acid synthase 2 (ltaS2).